Consider the following 148-residue polypeptide: Snaclec B2 (148 aa).

The first 24 residues, 1-24, serve as a signal peptide directing secretion; it reads MGRLISVSFGLLVVFLSLSGTGAA. 3 cysteine pairs are disulfide-bonded: Cys27–Cys38, Cys55–Cys144, and Cys121–Cys136. One can recognise a C-type lectin domain in the interval 34–145; sequence YDQHCYKVFD…CRLLGHFVCK (112 aa).

Belongs to the snaclec family. Heterodimer; disulfide-linked. In terms of tissue distribution, expressed by the venom gland.

Its subcellular location is the secreted. Functionally, interferes with one step of hemostasis (modulation of platelet aggregation, or coagulation cascade, for example). This chain is Snaclec B2, found in Macrovipera lebetinus (Levantine viper).